Consider the following 508-residue polypeptide: MILGPYIAVSPLIVISLGGALLMLAEAFSHRREESHDRRSGPSSDMALGTAITLLAGAVFSGAVGFVGPETLEGFDSLAPYLVMDRFTLFFSFVLCLGGALAALLAGGYLPEHRLDRGEFYPLLTFSTVGAIILAGAGDLLTLFLGLETMSLGAYALTGFRRTSPRSTEAAIKYFLLGSFAAALLLYGGALIYGATGHTDLAGIGEAIAGAKGAAAPNPALLLIGAALVLVGLAFKVSAVPFHMWTPDAYEGAPTPATTFMAVAVKGAAFATLLRVLLGAFGSPALSSWAAGWPPAVAVMALLTMTVANLIAGRQESVKRMLAYSSIAHAGYLLVGVAATVRASEDAQASVMFYLLAYTVSTVGAFGTLILCGSRGAEAVSYEDLSGIGKRHPVAALAFSLFLLSLAGVPPTAGFFGKLYIVKAAMGAELYTLSVALLLNSVLSAYYYLRVLVYMYMREPAPGAPIARPMRSGYVNAALVVSAVLVMVLGIWPTTSLGIAVRAVLASR.

13 helical membrane passes run 2 to 22, 47 to 67, 87 to 107, 126 to 146, 175 to 195, 220 to 240, 260 to 280, 291 to 311, 321 to 341, 351 to 371, 396 to 416, 431 to 453, and 479 to 499; these read ILGP…GALL, ALGT…VGFV, FTLF…LLAG, FSTV…LFLG, FLLG…IYGA, ALLL…VSAV, FMAV…LLGA, AGWP…ANLI, MLAY…AATV, VMFY…TLIL, ALAF…AGFF, YTLS…RVLV, and LVVS…SLGI.

It belongs to the complex I subunit 2 family. NDH-1 is composed of 14 different subunits. Subunits NuoA, H, J, K, L, M, N constitute the membrane sector of the complex.

The protein resides in the cell inner membrane. It catalyses the reaction a quinone + NADH + 5 H(+)(in) = a quinol + NAD(+) + 4 H(+)(out). In terms of biological role, NDH-1 shuttles electrons from NADH, via FMN and iron-sulfur (Fe-S) centers, to quinones in the respiratory chain. The immediate electron acceptor for the enzyme in this species is believed to be ubiquinone. Couples the redox reaction to proton translocation (for every two electrons transferred, four hydrogen ions are translocated across the cytoplasmic membrane), and thus conserves the redox energy in a proton gradient. This Sorangium cellulosum (strain So ce56) (Polyangium cellulosum (strain So ce56)) protein is NADH-quinone oxidoreductase subunit N 1.